A 189-amino-acid polypeptide reads, in one-letter code: Potassium-transporting ATPase KdpC subunit (189 aa).

A helical transmembrane segment spans residues 10-30 (ITLVFCVFFSVFYILILWLFA).

The protein belongs to the KdpC family. As to quaternary structure, the system is composed of three essential subunits: KdpA, KdpB and KdpC.

Its subcellular location is the cell inner membrane. Functionally, part of the high-affinity ATP-driven potassium transport (or Kdp) system, which catalyzes the hydrolysis of ATP coupled with the electrogenic transport of potassium into the cytoplasm. This subunit acts as a catalytic chaperone that increases the ATP-binding affinity of the ATP-hydrolyzing subunit KdpB by the formation of a transient KdpB/KdpC/ATP ternary complex. In Bacteroides thetaiotaomicron (strain ATCC 29148 / DSM 2079 / JCM 5827 / CCUG 10774 / NCTC 10582 / VPI-5482 / E50), this protein is Potassium-transporting ATPase KdpC subunit.